Here is a 128-residue protein sequence, read N- to C-terminus: Glycine cleavage system H protein (128 aa).

Positions 25 to 107 constitute a Lipoyl-binding domain; the sequence is TVRVGITDFA…YEGGWLFEIT (83 aa). Lys-66 is subject to N6-lipoyllysine.

The protein belongs to the GcvH family. As to quaternary structure, the glycine cleavage system is composed of four proteins: P, T, L and H. Requires (R)-lipoate as cofactor.

The glycine cleavage system catalyzes the degradation of glycine. The H protein shuttles the methylamine group of glycine from the P protein to the T protein. This Micrococcus luteus (strain ATCC 4698 / DSM 20030 / JCM 1464 / CCM 169 / CCUG 5858 / IAM 1056 / NBRC 3333 / NCIMB 9278 / NCTC 2665 / VKM Ac-2230) (Micrococcus lysodeikticus) protein is Glycine cleavage system H protein.